Reading from the N-terminus, the 275-residue chain is Urease accessory protein UreD (275 aa).

The protein belongs to the UreD family. UreD, UreF and UreG form a complex that acts as a GTP-hydrolysis-dependent molecular chaperone, activating the urease apoprotein by helping to assemble the nickel containing metallocenter of UreC. The UreE protein probably delivers the nickel.

It is found in the cytoplasm. Required for maturation of urease via the functional incorporation of the urease nickel metallocenter. In Cereibacter sphaeroides (strain ATCC 17025 / ATH 2.4.3) (Rhodobacter sphaeroides), this protein is Urease accessory protein UreD.